The chain runs to 411 residues: Citrate synthase (411 aa).

Active-site residues include His-304 and Asp-363.

Belongs to the citrate synthase family.

It carries out the reaction oxaloacetate + acetyl-CoA + H2O = citrate + CoA + H(+). The protein operates within carbohydrate metabolism; tricarboxylic acid cycle; isocitrate from oxaloacetate: step 1/2. The protein is Citrate synthase (gltA) of Rickettsia conorii subsp. caspia (strain A-167) (Astrakhan rickettsia).